Consider the following 248-residue polypeptide: UPF0736 protein ABC2536 (248 aa).

Belongs to the UPF0736 family.

This chain is UPF0736 protein ABC2536, found in Shouchella clausii (strain KSM-K16) (Alkalihalobacillus clausii).